Here is a 968-residue protein sequence, read N- to C-terminus: RNA polymerase-associated protein RapA (968 aa).

One can recognise a Helicase ATP-binding domain in the interval 164-334; the sequence is DVGRRHAPRV…FARLRLLDPS (171 aa). Position 177-184 (177-184) interacts with ATP; that stretch reads DEVGLGKT. Positions 280-283 match the DEAH box motif; the sequence is DEAH. Residues 490 to 644 enclose the Helicase C-terminal domain; it reads RVEWLMGHLT…TCPTGRAIYD (155 aa).

The protein belongs to the SNF2/RAD54 helicase family. RapA subfamily. As to quaternary structure, interacts with the RNAP. Has a higher affinity for the core RNAP than for the holoenzyme. Its ATPase activity is stimulated by binding to RNAP.

Functionally, transcription regulator that activates transcription by stimulating RNA polymerase (RNAP) recycling in case of stress conditions such as supercoiled DNA or high salt concentrations. Probably acts by releasing the RNAP, when it is trapped or immobilized on tightly supercoiled DNA. Does not activate transcription on linear DNA. Probably not involved in DNA repair. This chain is RNA polymerase-associated protein RapA, found in Citrobacter koseri (strain ATCC BAA-895 / CDC 4225-83 / SGSC4696).